We begin with the raw amino-acid sequence, 234 residues long: Small ribosomal subunit protein eS4 (234 aa).

Residues 37–99 (VPLLIVLRDV…REEYYRVFPG (63 aa)) enclose the S4 RNA-binding domain.

This sequence belongs to the eukaryotic ribosomal protein eS4 family.

The polypeptide is Small ribosomal subunit protein eS4 (rps4e) (Haloarcula marismortui (strain ATCC 43049 / DSM 3752 / JCM 8966 / VKM B-1809) (Halobacterium marismortui)).